A 43-amino-acid chain; its full sequence is Cytochrome b559 subunit beta (43 aa).

The helical transmembrane segment at 18–34 (WLAIHGLAIPTVFFFGA) threads the bilayer. Heme is bound at residue histidine 22.

The protein belongs to the PsbE/PsbF family. Heterodimer of an alpha subunit and a beta subunit. PSII is composed of 1 copy each of membrane proteins PsbA, PsbB, PsbC, PsbD, PsbE, PsbF, PsbH, PsbI, PsbJ, PsbK, PsbL, PsbM, PsbT, PsbY, PsbZ, Psb30/Ycf12, at least 3 peripheral proteins of the oxygen-evolving complex and a large number of cofactors. It forms dimeric complexes. It depends on heme b as a cofactor.

It localises to the plastid. It is found in the chloroplast thylakoid membrane. Functionally, this b-type cytochrome is tightly associated with the reaction center of photosystem II (PSII). PSII is a light-driven water:plastoquinone oxidoreductase that uses light energy to abstract electrons from H(2)O, generating O(2) and a proton gradient subsequently used for ATP formation. It consists of a core antenna complex that captures photons, and an electron transfer chain that converts photonic excitation into a charge separation. The chain is Cytochrome b559 subunit beta from Cyanidium caldarium (Red alga).